We begin with the raw amino-acid sequence, 252 residues long: Putative pinene synthase (252 aa).

The protein belongs to the terpene synthase family. Tpsa subfamily.

This Fragaria ananassa (Strawberry) protein is Putative pinene synthase.